The following is a 251-amino-acid chain: Hydroxyacylglutathione hydrolase (251 aa).

Zn(2+)-binding residues include H53, H55, D57, H58, H110, D127, and H165.

The protein belongs to the metallo-beta-lactamase superfamily. Glyoxalase II family. Monomer. Zn(2+) is required as a cofactor.

It catalyses the reaction an S-(2-hydroxyacyl)glutathione + H2O = a 2-hydroxy carboxylate + glutathione + H(+). It functions in the pathway secondary metabolite metabolism; methylglyoxal degradation; (R)-lactate from methylglyoxal: step 2/2. In terms of biological role, thiolesterase that catalyzes the hydrolysis of S-D-lactoyl-glutathione to form glutathione and D-lactic acid. This chain is Hydroxyacylglutathione hydrolase, found in Klebsiella pneumoniae subsp. pneumoniae (strain ATCC 700721 / MGH 78578).